The primary structure comprises 433 residues: Enolase (433 aa).

Q167 lines the (2R)-2-phosphoglycerate pocket. The Proton donor role is filled by E209. Residues D246, E291, and D318 each coordinate Mg(2+). (2R)-2-phosphoglycerate is bound by residues K343, R372, S373, and K394. K343 (proton acceptor) is an active-site residue.

This sequence belongs to the enolase family. Component of the RNA degradosome, a multiprotein complex involved in RNA processing and mRNA degradation. Mg(2+) is required as a cofactor.

The protein resides in the cytoplasm. The protein localises to the secreted. It is found in the cell surface. It carries out the reaction (2R)-2-phosphoglycerate = phosphoenolpyruvate + H2O. The protein operates within carbohydrate degradation; glycolysis; pyruvate from D-glyceraldehyde 3-phosphate: step 4/5. In terms of biological role, catalyzes the reversible conversion of 2-phosphoglycerate (2-PG) into phosphoenolpyruvate (PEP). It is essential for the degradation of carbohydrates via glycolysis. The chain is Enolase from Photorhabdus laumondii subsp. laumondii (strain DSM 15139 / CIP 105565 / TT01) (Photorhabdus luminescens subsp. laumondii).